A 270-amino-acid polypeptide reads, in one-letter code: Elongation factor Ts (270 aa).

An involved in Mg(2+) ion dislocation from EF-Tu region spans residues 76–79; that stretch reads TDFV.

Belongs to the EF-Ts family.

The protein localises to the cytoplasm. Associates with the EF-Tu.GDP complex and induces the exchange of GDP to GTP. It remains bound to the aminoacyl-tRNA.EF-Tu.GTP complex up to the GTP hydrolysis stage on the ribosome. This is Elongation factor Ts from Corynebacterium aurimucosum (strain ATCC 700975 / DSM 44827 / CIP 107346 / CN-1) (Corynebacterium nigricans).